The primary structure comprises 672 residues: tRNA 5-methylaminomethyl-2-thiouridine biosynthesis bifunctional protein MnmC (672 aa).

The segment at 1–241 (MLKVTTAHIH…KRECLQGFKP (241 aa)) is tRNA (mnm(5)s(2)U34)-methyltransferase. The segment at 271–672 (IGGGISSLFS…RKLLKGTPVK (402 aa)) is FAD-dependent cmnm(5)s(2)U34 oxidoreductase.

This sequence in the N-terminal section; belongs to the methyltransferase superfamily. tRNA (mnm(5)s(2)U34)-methyltransferase family. It in the C-terminal section; belongs to the DAO family. It depends on FAD as a cofactor.

The protein localises to the cytoplasm. The catalysed reaction is 5-aminomethyl-2-thiouridine(34) in tRNA + S-adenosyl-L-methionine = 5-methylaminomethyl-2-thiouridine(34) in tRNA + S-adenosyl-L-homocysteine + H(+). In terms of biological role, catalyzes the last two steps in the biosynthesis of 5-methylaminomethyl-2-thiouridine (mnm(5)s(2)U) at the wobble position (U34) in tRNA. Catalyzes the FAD-dependent demodification of cmnm(5)s(2)U34 to nm(5)s(2)U34, followed by the transfer of a methyl group from S-adenosyl-L-methionine to nm(5)s(2)U34, to form mnm(5)s(2)U34. This chain is tRNA 5-methylaminomethyl-2-thiouridine biosynthesis bifunctional protein MnmC, found in Mannheimia succiniciproducens (strain KCTC 0769BP / MBEL55E).